Consider the following 234-residue polypeptide: Phosphoribosylaminoimidazole-succinocarboxamide synthase (234 aa).

Belongs to the SAICAR synthetase family.

The catalysed reaction is 5-amino-1-(5-phospho-D-ribosyl)imidazole-4-carboxylate + L-aspartate + ATP = (2S)-2-[5-amino-1-(5-phospho-beta-D-ribosyl)imidazole-4-carboxamido]succinate + ADP + phosphate + 2 H(+). Its pathway is purine metabolism; IMP biosynthesis via de novo pathway; 5-amino-1-(5-phospho-D-ribosyl)imidazole-4-carboxamide from 5-amino-1-(5-phospho-D-ribosyl)imidazole-4-carboxylate: step 1/2. This chain is Phosphoribosylaminoimidazole-succinocarboxamide synthase, found in Sulfurisphaera tokodaii (strain DSM 16993 / JCM 10545 / NBRC 100140 / 7) (Sulfolobus tokodaii).